A 170-amino-acid polypeptide reads, in one-letter code: F107 fimbrial protein (170 aa).

The first 21 residues, 1–21 (MKRLVFISFVALSMTAGSAMA), serve as a signal peptide directing secretion. Cys-37 and Cys-78 are joined by a disulfide.

The protein belongs to the fimbrial protein family.

The protein resides in the fimbrium. Functionally, fimbriae (also called pili), polar filaments radiating from the surface of the bacterium to a length of 0.5-1.5 micrometers and numbering 100-300 per cell, enable bacteria to colonize the epithelium of specific host organs. This is F107 fimbrial protein (fedA) from Escherichia coli.